An 895-amino-acid polypeptide reads, in one-letter code: Serine/threonine-protein kinase-like protein ACR4 (895 aa).

Positions 1–29 (MRMFETRAREWILLVKLVLFTSIWQLASA) are cleaved as a signal peptide. The Extracellular segment spans residues 30 to 434 (LGSMSSIAIS…FWSLQLPIAT (405 aa)). Tandem repeats lie at residues 38 to 73 (ISYG…GTPG), 77 to 112 (FIGL…GVPQ), 130 to 167 (LCGL…VFDK), 169 to 202 (LHSL…QVIS), 210 to 245 (FQKI…EEVT), 262 to 296 (LLAV…TPAP), and 301 to 339 (FYDL…AVSP). The tract at residues 38-339 (ISYGEGGSVF…PASIPLAVSP (302 aa)) is 7 X 36 AA repeats. Residues asparagine 158 and asparagine 196 are each glycosylated (N-linked (GlcNAc...) asparagine). Asparagine 290 carries an N-linked (GlcNAc...) asparagine glycan. The stretch at 346–395 (PCPPGTHELSNQENSPCKFTGSHICLPCSTSCPPGMYQKSVCTERSDQVC) is one TNFR-Cys repeat. 3 cysteine pairs are disulfide-bonded: cysteine 347–cysteine 370, cysteine 373–cysteine 387, and cysteine 377–cysteine 395. N-linked (GlcNAc...) asparagine glycans are attached at residues asparagine 398 and asparagine 410. A helical membrane pass occupies residues 435 to 455 (AEIGFALFLVAVVSITAALYI). Over 456–895 (RYRLRNCRCS…GQSLFLHHNF (440 aa)) the chain is Cytoplasmic. Serine 475 is subject to Phosphoserine. The Protein kinase domain maps to 512–789 (FKEESIVGKG…KVTTALERAL (278 aa)). Residues 518-526 (VGKGSFSCV) and lysine 540 contribute to the ATP site. The active-site Proton acceptor is the aspartate 641. Residues 818-895 (SWRIGSKRSG…GQSLFLHHNF (78 aa)) form a disordered region. Positions 865–877 (EGRKQQEALRSLE) are enriched in basic and acidic residues.

It belongs to the protein kinase superfamily. Ser/Thr protein kinase family. In terms of assembly, homodimer. Interacts with PP2A3. Post-translationally, autophosphorylated and phosphorylated by ALE2. As to expression, expressed in seedlings, floral buds, siliques, leaves, shoot apical meristems (SAM), and, to a lower extent, in roots.

It localises to the cell membrane. Its subcellular location is the endosome. The protein localises to the multivesicular body membrane. It carries out the reaction L-seryl-[protein] + ATP = O-phospho-L-seryl-[protein] + ADP + H(+). The enzyme catalyses L-threonyl-[protein] + ATP = O-phospho-L-threonyl-[protein] + ADP + H(+). Its function is as follows. Controls formative cell division in meristems, including root tips and lateral root initiation zones of the pericycle, in response to CLE40 signal. Acts with CLE40p peptide as a ligand-receptor pair in a signal transduction pathway, coordinating movement of the root tip and organization of cell divisions in the root meristem. Required during embryogenesis and development, probably for the differentiation of protoderm and epidermal cells. Involved in the regulation of cellular organization during the development of sepal margins and ovule integument outgrowth and promotes giant cell formation. Can phosphorylate ALE2. This chain is Serine/threonine-protein kinase-like protein ACR4, found in Arabidopsis thaliana (Mouse-ear cress).